The primary structure comprises 304 residues: Porphobilinogen deaminase (304 aa).

Residue cysteine 239 is modified to S-(dipyrrolylmethanemethyl)cysteine.

The protein belongs to the HMBS family. In terms of assembly, monomer. The cofactor is dipyrromethane.

It carries out the reaction 4 porphobilinogen + H2O = hydroxymethylbilane + 4 NH4(+). The protein operates within porphyrin-containing compound metabolism; protoporphyrin-IX biosynthesis; coproporphyrinogen-III from 5-aminolevulinate: step 2/4. Its function is as follows. Tetrapolymerization of the monopyrrole PBG into the hydroxymethylbilane pre-uroporphyrinogen in several discrete steps. The chain is Porphobilinogen deaminase from Brucella ovis (strain ATCC 25840 / 63/290 / NCTC 10512).